The chain runs to 804 residues: Phenylalanine--tRNA ligase beta subunit (804 aa).

Positions 38-148 (RAAFRAFTIA…ENAPVGTSFA (111 aa)) constitute a tRNA-binding domain. Positions 401-476 (HTARVIDFPV…RIHGINRIDP (76 aa)) constitute a B5 domain. Mg(2+)-binding residues include D454, D460, E463, and E464. Residues 710-803 (SLFQSLKRDY…VAKQTGGVLR (94 aa)) enclose the FDX-ACB domain.

It belongs to the phenylalanyl-tRNA synthetase beta subunit family. Type 1 subfamily. In terms of assembly, tetramer of two alpha and two beta subunits. Mg(2+) is required as a cofactor.

The protein resides in the cytoplasm. It catalyses the reaction tRNA(Phe) + L-phenylalanine + ATP = L-phenylalanyl-tRNA(Phe) + AMP + diphosphate + H(+). The sequence is that of Phenylalanine--tRNA ligase beta subunit from Brucella melitensis biotype 1 (strain ATCC 23456 / CCUG 17765 / NCTC 10094 / 16M).